The sequence spans 288 residues: MATYAVGDLQGCLQPLKCLLDRVSFNPAVDRLWLVGDLVNRGPESLETLRFLYSIRHSLVCVLGNHDLHLLAAWHNVERLKKSDTLREIIEAPDADQLFDWLRQQKLLHYDEPRGIALVHAGIPPQWTLGKALELAAEVEEVLRDDTRLQLYLDGMYGNEPNKWSKNLAGVERLRVITNYFTRMRFCTADGKLDLKSKEGLGSAPKGYKAWYAHKDRRSRHVKIIFGHWAALQGEVTEPDVIALDTGCVWGGAMTLYNVDSGEYHRCDCADDGTLRQPAQPTTLNDHT.

This sequence belongs to the Ap4A hydrolase family.

The enzyme catalyses P(1),P(4)-bis(5'-adenosyl) tetraphosphate + H2O = 2 ADP + 2 H(+). Its function is as follows. Hydrolyzes diadenosine 5',5'''-P1,P4-tetraphosphate to yield ADP. The sequence is that of Bis(5'-nucleosyl)-tetraphosphatase, symmetrical from Pseudomonas putida (strain ATCC 700007 / DSM 6899 / JCM 31910 / BCRC 17059 / LMG 24140 / F1).